The following is a 490-amino-acid chain: Glutamate--tRNA ligase (490 aa).

The 'HIGH' region signature appears at 10 to 20 (PSPTGSLHIGG). Positions 251-255 (KLSKR) match the 'KMSKS' region motif. Lys-254 contacts ATP.

Belongs to the class-I aminoacyl-tRNA synthetase family. Glutamate--tRNA ligase type 1 subfamily. As to quaternary structure, monomer.

Its subcellular location is the cytoplasm. It carries out the reaction tRNA(Glu) + L-glutamate + ATP = L-glutamyl-tRNA(Glu) + AMP + diphosphate. Catalyzes the attachment of glutamate to tRNA(Glu) in a two-step reaction: glutamate is first activated by ATP to form Glu-AMP and then transferred to the acceptor end of tRNA(Glu). In Moorella thermoacetica (strain ATCC 39073 / JCM 9320), this protein is Glutamate--tRNA ligase.